The following is a 1217-amino-acid chain: Valine--tRNA ligase (1217 aa).

One can recognise a GST C-terminal domain in the interval 27–155 (NAKQQSQVWQ…ISLCEKMVPV (129 aa)). The short motif at 293-303 (PNVTGSLHLGH) is the 'HIGH' region element. Residues 809–813 (KMSKS) carry the 'KMSKS' region motif. Lys812 is an ATP binding site.

It belongs to the class-I aminoacyl-tRNA synthetase family.

It carries out the reaction tRNA(Val) + L-valine + ATP = L-valyl-tRNA(Val) + AMP + diphosphate. The polypeptide is Valine--tRNA ligase (vars1) (Takifugu rubripes (Japanese pufferfish)).